We begin with the raw amino-acid sequence, 392 residues long: Succinate--CoA ligase [ADP-forming] subunit beta (392 aa).

An ATP-grasp domain is found at 9–248 (KDILRKFGVA…ISEEDPFEVE (240 aa)). ATP-binding positions include Lys-50, 57–59 (GRG), Glu-103, Met-106, and Glu-111. Asn-203 and Asp-217 together coordinate Mg(2+). Substrate-binding positions include Asn-268 and 325-327 (GIV).

Belongs to the succinate/malate CoA ligase beta subunit family. In terms of assembly, heterotetramer of two alpha and two beta subunits. Mg(2+) is required as a cofactor.

It carries out the reaction succinate + ATP + CoA = succinyl-CoA + ADP + phosphate. It catalyses the reaction GTP + succinate + CoA = succinyl-CoA + GDP + phosphate. It participates in carbohydrate metabolism; tricarboxylic acid cycle; succinate from succinyl-CoA (ligase route): step 1/1. In terms of biological role, succinyl-CoA synthetase functions in the citric acid cycle (TCA), coupling the hydrolysis of succinyl-CoA to the synthesis of either ATP or GTP and thus represents the only step of substrate-level phosphorylation in the TCA. The beta subunit provides nucleotide specificity of the enzyme and binds the substrate succinate, while the binding sites for coenzyme A and phosphate are found in the alpha subunit. This Chlorobium phaeobacteroides (strain DSM 266 / SMG 266 / 2430) protein is Succinate--CoA ligase [ADP-forming] subunit beta.